We begin with the raw amino-acid sequence, 235 residues long: N-alpha-acetyltransferase 10 (235 aa).

Met1 is modified (N-acetylmethionine). The segment at 1–58 is interaction with NAA15; the sequence is MNIRNARPEDLMNMQHCNLLCLPENYQMKYYFYHGLSWPQLSYIAEDENGKIVGYVLA. Positions 1–152 constitute an N-acetyltransferase domain; that stretch reads MNIRNARPED…DAYAMKRDLT (152 aa). At Lys136 the chain carries N6-acetyllysine; by autocatalysis. A disordered region spans residues 178 to 235; that stretch reads NKVESKGNSPPSSGEACREEKGLAAEDSGGDSKDLSEVSETTESTDVKDSSEASDSAS. 3 positions are modified to phosphoserine: Ser182, Ser186, and Ser205. The segment covering 193–213 has biased composition (basic and acidic residues); the sequence is ACREEKGLAAEDSGGDSKDLS. The residue at position 209 (Ser209) is a Phosphoserine; by IKKB. Residues Ser213 and Ser216 each carry the phosphoserine modification.

Belongs to the acetyltransferase family. ARD1 subfamily. Component of the N-terminal acetyltransferase A complex (also called the NatA complex) composed of NAA10 and NAA15. Within the complex interacts with NAA15. Component of the N-terminal acetyltransferase A (NatA)/HYPK complex at least composed of NAA10, NAA15 and HYPK, which has N-terminal acetyltransferase activity. In complex with NAA15, interacts with HYPK. Component of the N-terminal acetyltransferase E (NatE) complex at least composed of NAA10, NAA15 and NAA50. Within the complex interacts with NAA15; the interaction is required for binding to NAAT50. Interacts with NAAT50. The interaction of the NatA complex with NAA50 reduces the acetylation activity of the NatA complex. Component of the N-terminal acetyltransferase E (NatE)/HYPK complex at least composed of NAA10, NAA15, NAA50 and HYPK. In complex with NAA15, interacts with HYPK; the interaction with HYPK reduces the capacity of the NatA complex to interact with NAA50. Interacts with HIF1A (via its ODD domain); the interaction increases HIF1A protein stability during normoxia, an down-regulates it when induced by hypoxia. Interacts with the ribosome. Binds to MYLK. Interacts with NAA16. Interacts (via its C-terminal domain) with TSC2, leading to its acetylation. Interacts with IKBKB. Interacts with HSPA1A and HSPA1B leading to its acetylation. Post-translationally, cleaved by caspases during apoptosis. In terms of processing, phosphorylation by IKBKB/IKKB at Ser-209 promotes its proteasome-mediated degradation. Autoacetylated at Lys-136 which stimulates its catalytic activity. Ubiquitous.

It is found in the cytoplasm. It localises to the nucleus. It carries out the reaction N-terminal glycyl-[protein] + acetyl-CoA = N-terminal N(alpha)-acetylglycyl-[protein] + CoA + H(+). The enzyme catalyses N-terminal L-alanyl-[protein] + acetyl-CoA = N-terminal N(alpha)-acetyl-L-alanyl-[protein] + CoA + H(+). The catalysed reaction is N-terminal L-seryl-[protein] + acetyl-CoA = N-terminal N(alpha)-acetyl-L-seryl-[protein] + CoA + H(+). It catalyses the reaction N-terminal L-valyl-[protein] + acetyl-CoA = N-terminal N(alpha)-acetyl-L-valyl-[protein] + CoA + H(+). It carries out the reaction N-terminal L-cysteinyl-[protein] + acetyl-CoA = N-terminal N(alpha)-acetyl-L-cysteinyl-[protein] + CoA + H(+). The enzyme catalyses N-terminal L-threonyl-[protein] + acetyl-CoA = N-terminal N(alpha)-acetyl-L-threonyl-[protein] + CoA + H(+). Functionally, catalytic subunit of N-terminal acetyltransferase complexes which display alpha (N-terminal) acetyltransferase activity. Acetylates amino termini that are devoid of initiator methionine. The alpha (N-terminal) acetyltransferase activity may be important for vascular, hematopoietic and neuronal growth and development. Without NAA15, displays epsilon (internal) acetyltransferase activity towards HIF1A, thereby promoting its degradation. Represses MYLK kinase activity by acetylation, and thus represses tumor cell migration. Acetylates, and stabilizes TSC2, thereby repressing mTOR activity and suppressing cancer development. Acetylates HSPA1A and HSPA1B at 'Lys-77' which enhances its chaperone activity and leads to preferential binding to co-chaperone HOPX. Acetylates HIST1H4A. Acts as a negative regulator of sister chromatid cohesion during mitosis. In Homo sapiens (Human), this protein is N-alpha-acetyltransferase 10 (NAA10).